The following is a 326-amino-acid chain: Malate dehydrogenase (326 aa).

11-17 (GAAGQIG) provides a ligand contact to NAD(+). Substrate is bound by residues Arg-92 and Arg-98. NAD(+)-binding positions include Asn-105, Gln-112, and 129-131 (VGN). Residues Asn-131 and Arg-162 each coordinate substrate. The active-site Proton acceptor is His-187.

Belongs to the LDH/MDH superfamily. MDH type 2 family.

It catalyses the reaction (S)-malate + NAD(+) = oxaloacetate + NADH + H(+). Catalyzes the reversible oxidation of malate to oxaloacetate. This Chromobacterium violaceum (strain ATCC 12472 / DSM 30191 / JCM 1249 / CCUG 213 / NBRC 12614 / NCIMB 9131 / NCTC 9757 / MK) protein is Malate dehydrogenase.